The chain runs to 325 residues: GMP reductase (325 aa).

Catalysis depends on Cys174, which acts as the Thioimidate intermediate. 203-226 (LIADGGIRTHGDIAKSIRFGASMV) serves as a coordination point for NADP(+).

It belongs to the IMPDH/GMPR family. GuaC type 2 subfamily.

It catalyses the reaction IMP + NH4(+) + NADP(+) = GMP + NADPH + 2 H(+). Its function is as follows. Catalyzes the irreversible NADPH-dependent deamination of GMP to IMP. It functions in the conversion of nucleobase, nucleoside and nucleotide derivatives of G to A nucleotides, and in maintaining the intracellular balance of A and G nucleotides. The protein is GMP reductase of Staphylococcus aureus (strain JH9).